Reading from the N-terminus, the 248-residue chain is Probable transcriptional regulatory protein RPC_4807 (248 aa).

The tract at residues 1-21 (MAGHSQFKNIMHRKGRQDAQK) is disordered.

Belongs to the TACO1 family.

It is found in the cytoplasm. The chain is Probable transcriptional regulatory protein RPC_4807 from Rhodopseudomonas palustris (strain BisB18).